A 100-amino-acid chain; its full sequence is Ubiquinol-cytochrome-C reductase complex subunit IX, mitochondrial (100 aa).

The N-terminal 30 residues, 1-30 (MQTHVRRVALQALRPCLRAGLMAPKFPVRF), are a transit peptide targeting the mitochondrion. A helical membrane pass occupies residues 66-86 (LLMRLFFAFVAYVVAMKVFGA).

Plants bc1 complex contains 10 subunits; 3 respiratory subunits, 2 core proteins and 5 low-molecular weight proteins.

Its subcellular location is the mitochondrion inner membrane. In terms of biological role, this is a component of the ubiquinol-cytochrome c reductase complex (complex III or cytochrome b-c1 complex), which is part of the mitochondrial respiratory chain. This chain is Ubiquinol-cytochrome-C reductase complex subunit IX, mitochondrial, found in Euglena gracilis.